Reading from the N-terminus, the 442-residue chain is 5-methylthioadenosine/S-adenosylhomocysteine deaminase (442 aa).

Positions 70 and 72 each coordinate Zn(2+). Glu-99 and His-191 together coordinate substrate. His-218 contacts Zn(2+). Positions 221 and 306 each coordinate substrate. Position 306 (Asp-306) interacts with Zn(2+).

The protein belongs to the metallo-dependent hydrolases superfamily. MTA/SAH deaminase family. It depends on Zn(2+) as a cofactor.

It carries out the reaction S-adenosyl-L-homocysteine + H2O + H(+) = S-inosyl-L-homocysteine + NH4(+). The enzyme catalyses S-methyl-5'-thioadenosine + H2O + H(+) = S-methyl-5'-thioinosine + NH4(+). Its function is as follows. Catalyzes the deamination of 5-methylthioadenosine and S-adenosyl-L-homocysteine into 5-methylthioinosine and S-inosyl-L-homocysteine, respectively. Is also able to deaminate adenosine. The sequence is that of 5-methylthioadenosine/S-adenosylhomocysteine deaminase from Nitratidesulfovibrio vulgaris (strain DP4) (Desulfovibrio vulgaris).